The primary structure comprises 330 residues: Ornithine carbamoyltransferase (330 aa).

Residues 57–60 (STRT), Q84, R108, and 135–138 (HPTQ) each bind carbamoyl phosphate. Residues N168, D232, and 236–237 (SM) each bind L-ornithine. Residues 273–274 (CL) and R318 each bind carbamoyl phosphate.

Belongs to the aspartate/ornithine carbamoyltransferase superfamily. OTCase family.

Its subcellular location is the cytoplasm. It carries out the reaction carbamoyl phosphate + L-ornithine = L-citrulline + phosphate + H(+). It participates in amino-acid biosynthesis; L-arginine biosynthesis; L-arginine from L-ornithine and carbamoyl phosphate: step 1/3. Its function is as follows. Reversibly catalyzes the transfer of the carbamoyl group from carbamoyl phosphate (CP) to the N(epsilon) atom of ornithine (ORN) to produce L-citrulline. This chain is Ornithine carbamoyltransferase, found in Alkaliphilus metalliredigens (strain QYMF).